Reading from the N-terminus, the 200-residue chain is Endochitinase (200 aa).

The Proton donor role is filled by glutamate 58.

The protein belongs to the glycosyl hydrolase 19 family. Chitinase class I subfamily.

It carries out the reaction Random endo-hydrolysis of N-acetyl-beta-D-glucosaminide (1-&gt;4)-beta-linkages in chitin and chitodextrins.. Its function is as follows. This protein functions as a defense against chitin-containing fungal pathogens. This Avena sativa (Oat) protein is Endochitinase.